A 1694-amino-acid chain; its full sequence is Clathrin heavy chain (1694 aa).

Residues 1-478 (MTNLPIRFQE…HDRKLALSIY (478 aa)) are globular terminal domain. WD40-like repeat regions lie at residues 23-67 (SIGF…KQMK), 68-107 (TDAAIMNPKEPILALKIGQVLQLISIEQKMQLKSCQMQEP), 108-149 (LEFW…PDLQ), 150-195 (NTEI…QSIE), 196-256 (GHAA…EIGA), 257-300 (SDFP…ISNE), and 301-329 (NIFVTAFEESTNGIIAVNRKGQVLSVSID). A binding site for the uncoating ATPase, involved in lattice disassembly region spans residues 448-464 (EKWLTEDKLECSEQLGD). The interval 479-522 (YRANASDKVITLFAETGEFDKIIAYCKKFNYKPDFMFLLQRMAN) is flexible linker. Residues 523-1694 (ANPMGAADFA…QQNYNQYGGF (1172 aa)) form a heavy chain arm region. 7 CHCR repeats span residues 537 to 681 (KEEG…QNLQ), 687 to 829 (AVSY…QEDY), 834 to 973 (IMSV…SLID), 980 to 1125 (LPES…VKEC), 1129 to 1270 (FIKA…FRLA), 1275 to 1421 (INII…LLIN), and 1424 to 1567 (LSVL…NSAF). The interval 1214 to 1523 (AAKVLYTNIS…YLYKKNNRWA (310 aa)) is involved in binding clathrin light chain. A trimerization region spans residues 1551 to 1694 (GEELLQYFVD…QQNYNQYGGF (144 aa)). Residues 1610 to 1640 (KVDQLVDDFKARQKKTEEEKEQQNIESSQYQ) adopt a coiled-coil conformation.

Belongs to the clathrin heavy chain family. Clathrin coats are formed from molecules containing 3 heavy chains and 3 light chains.

It is found in the cytoplasmic vesicle membrane. The protein resides in the membrane. It localises to the coated pit. Functionally, clathrin is the major protein of the polyhedral coat of coated pits and vesicles. The polypeptide is Clathrin heavy chain (chcA) (Dictyostelium discoideum (Social amoeba)).